Here is a 380-residue protein sequence, read N- to C-terminus: O-phospho-L-seryl-tRNA:Cys-tRNA synthase (380 aa).

Residues 86–87 (AR), asparagine 192, and 215–217 (SGH) contribute to the pyridoxal 5'-phosphate site. Lysine 218 is modified (N6-(pyridoxal phosphate)lysine).

Belongs to the SepCysS family. Homodimer. Interacts with SepRS. The cofactor is pyridoxal 5'-phosphate.

It carries out the reaction O-phospho-L-seryl-tRNA(Cys) + hydrogen sulfide + H(+) = L-cysteinyl-tRNA(Cys) + phosphate. Converts O-phospho-L-seryl-tRNA(Cys) (Sep-tRNA(Cys)) to L-cysteinyl-tRNA(Cys) (Cys-tRNA(Cys)). The chain is O-phospho-L-seryl-tRNA:Cys-tRNA synthase from Methanococcus maripaludis (strain C7 / ATCC BAA-1331).